Here is a 1221-residue protein sequence, read N- to C-terminus: Reverse gyrase subunit B (1221 aa).

The segment at 56–97 (NEPVAIFGSSCVLCGGDCSSVRLTSRIGICERCLPVDTETLR) adopts an RG N-terminal-type zinc-finger fold. Zn(2+)-binding residues include C66, C69, C85, and C88. ATP contacts are provided by residues Q161 and 178–185 (APTGTGKT). One can recognise a Helicase ATP-binding domain in the interval 165 to 400 (TRRLVKGCSF…AVVRELFDFE (236 aa)). Positions 284–287 (DDVD) match the DEAD box motif. The Helicase C-terminal domain maps to 424 to 600 (AVERIVRKAG…PLSLNTLMKL (177 aa)). The 157-residue stretch at 779-935 (SALMIVESPN…QVYRTEFHEV (157 aa)) folds into the Toprim domain. E785 serves as a coordination point for Mg(2+). The segment at 856–882 (LGRCSECGEQVVGSEECPNCGGEVELK) adopts an RG C-terminal-type zinc-finger fold. Zn(2+) is bound by residues C859, C862, C872, and C875. D904 provides a ligand contact to Mg(2+). The 269-residue stretch at 953–1221 (DAGRVSAQIL…MLHLAGVSGR (269 aa)) folds into the Topo IA-type catalytic domain.

It in the C-terminal section; belongs to the type IA topoisomerase family. This sequence in the N-terminal section; belongs to the DEAD box helicase family. DDVD subfamily. As to quaternary structure, heterodimer of an RgyrA and RgyrB subunit. The topoisomerase domain is shared between the two subunits. The cofactor is Zn(2+). Mg(2+) serves as cofactor. Post-translationally, the N-terminus is partially blocked.

The protein resides in the cytoplasm. The enzyme catalyses ATP + H2O = ADP + phosphate + H(+). In terms of biological role, modifies the topological state of DNA by introducing positive supercoils in an ATP-dependent process; dATP also allows positive supercoiling. Increases the linking number in steps of +1. Only this subunit binds ATP, it does so in a DNA- and RgyA-independent manner. Hydrolyzes ATP only in the presence of DNA. The RgyA subunit transiently cleaves a single DNA strand and remains covalently bound to the 5' DNA end probably through a tyrosine residue. It changes linking number in steps of one, and nicks DNA preferentially at 5'-CNNN | 3'-sites with a strong preference for 4 pyrimidine residues. There are about 1000 heterodimers per cell. May be involved in rewinding the DNA strands in the regions of the chromosome that have opened up to allow transcription or replication. Functionally, this subunit expressed in E.coli only has DNA-dependent ATPase activity at 80 degrees Celsius. Reverse gyrase activity is reconstituted after incubation at 80 degrees Celsius for 5 minutes, positive supercoiling requires ATP and Mg(2+). In the presence of ATP it binds and nicks substrate but does not make closed product. The chain is Reverse gyrase subunit B from Methanopyrus kandleri (strain AV19 / DSM 6324 / JCM 9639 / NBRC 100938).